The primary structure comprises 402 residues: Tryptophan synthase beta chain (402 aa).

Lys-91 carries the N6-(pyridoxal phosphate)lysine modification.

This sequence belongs to the TrpB family. Tetramer of two alpha and two beta chains. Requires pyridoxal 5'-phosphate as cofactor.

The catalysed reaction is (1S,2R)-1-C-(indol-3-yl)glycerol 3-phosphate + L-serine = D-glyceraldehyde 3-phosphate + L-tryptophan + H2O. The protein operates within amino-acid biosynthesis; L-tryptophan biosynthesis; L-tryptophan from chorismate: step 5/5. Functionally, the beta subunit is responsible for the synthesis of L-tryptophan from indole and L-serine. In Lactococcus lactis subsp. lactis (strain IL1403) (Streptococcus lactis), this protein is Tryptophan synthase beta chain (trpB).